Consider the following 159-residue polypeptide: uncharacterized protein (159 aa).

Helical transmembrane passes span 5-27 (TLDL…RGFV), 34-51 (ASIL…KRLV), 61-83 (SILL…MLFL), and 103-125 (FGFF…LLHV).

Its subcellular location is the cell membrane. This is an uncharacterized protein from Treponema pallidum (strain Nichols).